Consider the following 207-residue polypeptide: Probable nicotinate-nucleotide adenylyltransferase (207 aa).

It belongs to the NadD family.

It catalyses the reaction nicotinate beta-D-ribonucleotide + ATP + H(+) = deamido-NAD(+) + diphosphate. The protein operates within cofactor biosynthesis; NAD(+) biosynthesis; deamido-NAD(+) from nicotinate D-ribonucleotide: step 1/1. Its function is as follows. Catalyzes the reversible adenylation of nicotinate mononucleotide (NaMN) to nicotinic acid adenine dinucleotide (NaAD). The protein is Probable nicotinate-nucleotide adenylyltransferase of Desulfitobacterium hafniense (strain Y51).